Consider the following 368-residue polypeptide: 1-deoxy-D-xylulose 5-phosphate reductoisomerase (368 aa).

NADPH-binding residues include Thr7, Gly8, Ser9, Ile10, Gly31, Lys32, Asn33, and Asn113. Lys114 contributes to the 1-deoxy-D-xylulose 5-phosphate binding site. Glu115 is a binding site for NADPH. Asp133 lines the Mn(2+) pocket. The 1-deoxy-D-xylulose 5-phosphate site is built by Ser134, Glu135, Ser158, and His181. Glu135 provides a ligand contact to Mn(2+). An NADPH-binding site is contributed by Gly187. Residues Ser194, Asn199, Lys200, and Glu203 each contribute to the 1-deoxy-D-xylulose 5-phosphate site. Glu203 provides a ligand contact to Mn(2+).

It belongs to the DXR family. Requires Mg(2+) as cofactor. The cofactor is Mn(2+).

The enzyme catalyses 2-C-methyl-D-erythritol 4-phosphate + NADP(+) = 1-deoxy-D-xylulose 5-phosphate + NADPH + H(+). Its pathway is isoprenoid biosynthesis; isopentenyl diphosphate biosynthesis via DXP pathway; isopentenyl diphosphate from 1-deoxy-D-xylulose 5-phosphate: step 1/6. Catalyzes the NADPH-dependent rearrangement and reduction of 1-deoxy-D-xylulose-5-phosphate (DXP) to 2-C-methyl-D-erythritol 4-phosphate (MEP). The polypeptide is 1-deoxy-D-xylulose 5-phosphate reductoisomerase (Helicobacter pylori (strain Shi470)).